Reading from the N-terminus, the 286-residue chain is MKKQLFILSQYLLPHHLLSRLAGCIAECRVRWFKNAFTAWFAKRYQVDMSQALVEDLTAYEHFNAFFTRALKDGARPLDQTPGAVLSPADGAVSQLGPIEHGRVFQAKGHSFSVLELLGGDAALSAPFMGGDFATVYLSPKDYHRVHMPLAGTLREMVYIPGRIFSVNQTTAENVPELFARNERVACIFDTERGPMAVVLVGAMIVASIETVWAGLVTPPKRELKTFRYDEAARAPIHLEKGAELGRFKLGSTAIVLFGPDQVKWAEELVAGSPVQMGQGIAAPKA.

Active-site charge relay system; for autoendoproteolytic cleavage activity residues include Asp90, His147, and Ser252. Catalysis depends on Ser252, which acts as the Schiff-base intermediate with substrate; via pyruvic acid; for decarboxylase activity. Residue Ser252 is modified to Pyruvic acid (Ser); by autocatalysis.

It belongs to the phosphatidylserine decarboxylase family. PSD-B subfamily. Prokaryotic type I sub-subfamily. As to quaternary structure, heterodimer of a large membrane-associated beta subunit and a small pyruvoyl-containing alpha subunit. Pyruvate serves as cofactor. In terms of processing, is synthesized initially as an inactive proenzyme. Formation of the active enzyme involves a self-maturation process in which the active site pyruvoyl group is generated from an internal serine residue via an autocatalytic post-translational modification. Two non-identical subunits are generated from the proenzyme in this reaction, and the pyruvate is formed at the N-terminus of the alpha chain, which is derived from the carboxyl end of the proenzyme. The autoendoproteolytic cleavage occurs by a canonical serine protease mechanism, in which the side chain hydroxyl group of the serine supplies its oxygen atom to form the C-terminus of the beta chain, while the remainder of the serine residue undergoes an oxidative deamination to produce ammonia and the pyruvoyl prosthetic group on the alpha chain. During this reaction, the Ser that is part of the protease active site of the proenzyme becomes the pyruvoyl prosthetic group, which constitutes an essential element of the active site of the mature decarboxylase.

Its subcellular location is the cell membrane. It carries out the reaction a 1,2-diacyl-sn-glycero-3-phospho-L-serine + H(+) = a 1,2-diacyl-sn-glycero-3-phosphoethanolamine + CO2. The protein operates within phospholipid metabolism; phosphatidylethanolamine biosynthesis; phosphatidylethanolamine from CDP-diacylglycerol: step 2/2. Functionally, catalyzes the formation of phosphatidylethanolamine (PtdEtn) from phosphatidylserine (PtdSer). In Pseudomonas fluorescens (strain SBW25), this protein is Phosphatidylserine decarboxylase proenzyme.